A 92-amino-acid chain; its full sequence is Protein S100-A12 (92 aa).

2 EF-hand domains span residues 13-48 (NIFHQYSVRKGHFDTLSKGELKQLLTKELANTIKNI) and 49-84 (KDKAVIDEIFQGLDANQDEQVDFQEFISLVAIALKA). Position 16 (histidine 16) interacts with Cu cation. Histidine 16 is a Zn(2+) binding site. 3 residues coordinate Ca(2+): serine 19, lysine 22, and histidine 24. Aspartate 26 lines the Cu cation pocket. Zn(2+) is bound at residue aspartate 26. Ca(2+)-binding residues include threonine 27 and glutamate 32. The interval 38–53 (TKELANTIKNIKDKAV) is hinge domain. Ca(2+) contacts are provided by aspartate 62, asparagine 64, aspartate 66, glutamine 68, and glutamate 73. Residues histidine 86 and histidine 90 each coordinate Cu cation. Residues histidine 86 and histidine 90 each coordinate Zn(2+).

This sequence belongs to the S-100 family. In terms of assembly, homodimer. Homooligomer (tetramer or hexamer) in the presence of calcium, zinc and copper ions. Interacts with AGER and both calcium and zinc are essential for the interaction. Interacts with CACYBP in a calcium-dependent manner. As to expression, predominantly expressed by neutrophils, monocytes and activated macrophages. Expressed by eosinophils and macrophages in asthmatic airways in regions where mast cells accumulate. Found in high concentrations in the serum of patients suffering from various inflammatory disorders, such as rheumatoid arthritis, psoriatic arthritis, Crohn's disease, ulcerative colitis, and Kawasaki disease.

The protein localises to the secreted. The protein resides in the cytoplasm. It localises to the cytoskeleton. It is found in the cell membrane. Its function is as follows. S100A12 is a calcium-, zinc- and copper-binding protein which plays a prominent role in the regulation of inflammatory processes and immune response. Its pro-inflammatory activity involves recruitment of leukocytes, promotion of cytokine and chemokine production, and regulation of leukocyte adhesion and migration. Acts as an alarmin or a danger associated molecular pattern (DAMP) molecule and stimulates innate immune cells via binding to receptor for advanced glycation endproducts (AGER). Binding to AGER activates the MAP-kinase and NF-kappa-B signaling pathways leading to production of pro-inflammatory cytokines and up-regulation of cell adhesion molecules ICAM1 and VCAM1. Acts as a monocyte and mast cell chemoattractant. Can stimulate mast cell degranulation and activation which generates chemokines, histamine and cytokines inducing further leukocyte recruitment to the sites of inflammation. Can inhibit the activity of matrix metalloproteinases; MMP2, MMP3 and MMP9 by chelating Zn(2+) from their active sites. Possesses filariacidal and filariastatic activity. Calcitermin possesses antifungal activity against C.albicans and is also active against E.coli and P.aeruginosa but not L.monocytogenes and S.aureus. This chain is Protein S100-A12 (S100A12), found in Homo sapiens (Human).